The sequence spans 675 residues: Zinc finger protein 526 (675 aa).

3 consecutive C2H2-type zinc fingers follow at residues 56-78, 108-130, and 140-163; these read FMCS…QEQH, FQCG…QDAH, and YQCG…KTQH. A disordered region spans residues 160–195; that stretch reads KTQHLSSAADEPPSPLPPPTPPPPPPPPPPPPPPEV. The segment covering 171 to 194 has biased composition (pro residues); it reads PPSPLPPPTPPPPPPPPPPPPPPE. A C2H2-type 4 zinc finger spans residues 200-222; it reads YECPECSTLCATPEEFLEHQGTH. Residues 225 to 234 show a composition bias toward basic and acidic residues; sequence SLEKEEHNGL. The tract at residues 225–283 is disordered; it reads SLEKEEHNGLEEEEEDEEEGEEEEDDDDEETDEEEASSELTADDTGSNKSTADSAQSCG. Positions 235–261 are enriched in acidic residues; the sequence is EEEEEDEEEGEEEEDDDDEETDEEEAS. Polar residues predominate over residues 269–281; sequence TGSNKSTADSAQS. 4 C2H2-type zinc fingers span residues 312 to 334, 339 to 361, 367 to 389, and 395 to 416; these read FHCS…GRAH, HECT…QRLH, YLCV…RRAH, and HRCR…RRTH. Residues 415–439 are disordered; the sequence is THTGKSGTPTRVATVSPAPAEPTPP. Polar residues predominate over residues 418–427; the sequence is GKSGTPTRVA. 5 C2H2-type zinc fingers span residues 447–470, 477–499, 505–527, 533–555, and 578–600; these read LPCP…RAVH, HRCG…LRTH, FQCH…QLTH, YQCL…RRLH, and YYCG…QRVH. Residues 606 to 625 are disordered; that stretch reads LTLQPPRSPSPVPPPPPEPQ. A compositionally biased stretch (pro residues) spans 611–624; it reads PRSPSPVPPPPPEP.

This sequence belongs to the krueppel C2H2-type zinc-finger protein family.

The protein resides in the nucleus. In terms of biological role, may be involved in transcriptional regulation. This Mus musculus (Mouse) protein is Zinc finger protein 526 (Znf526).